The chain runs to 58 residues: MSPQTETKAMVGFKAGVKDYKLTYYTPDYETKDTDILAAFRVTPQPGVPPEEAGAAVA.

Positions 1–2 (MS) are excised as a propeptide. The residue at position 3 (Pro-3) is an N-acetylproline. The residue at position 14 (Lys-14) is an N6,N6,N6-trimethyllysine.

This sequence belongs to the RuBisCO large chain family. Type I subfamily. In terms of assembly, heterohexadecamer of 8 large chains and 8 small chains.

Its subcellular location is the plastid. The protein resides in the chloroplast. It catalyses the reaction 2 (2R)-3-phosphoglycerate + 2 H(+) = D-ribulose 1,5-bisphosphate + CO2 + H2O. The catalysed reaction is D-ribulose 1,5-bisphosphate + O2 = 2-phosphoglycolate + (2R)-3-phosphoglycerate + 2 H(+). In terms of biological role, ruBisCO catalyzes two reactions: the carboxylation of D-ribulose 1,5-bisphosphate, the primary event in carbon dioxide fixation, as well as the oxidative fragmentation of the pentose substrate in the photorespiration process. Both reactions occur simultaneously and in competition at the same active site. In Euonymus maackii (Maack's spindle tree), this protein is Ribulose bisphosphate carboxylase large chain (rbcL).